The primary structure comprises 568 residues: Urease subunit alpha (568 aa).

One can recognise a Urease domain in the interval 133 to 568 (GGVDTHIHFI…LPLAQKYFLF (436 aa)). 3 residues coordinate Ni(2+): H138, H140, and K221. At K221 the chain carries N6-carboxylysine. H223 is a substrate binding site. Positions 250 and 276 each coordinate Ni(2+). H324 acts as the Proton donor in catalysis. Position 364 (D364) interacts with Ni(2+).

It belongs to the metallo-dependent hydrolases superfamily. Urease alpha subunit family. In terms of assembly, heterohexamer of 3 UreC (alpha) and 3 UreAB (gamma/beta) subunits. Requires Ni cation as cofactor. Carboxylation allows a single lysine to coordinate two nickel ions.

The protein localises to the cytoplasm. The catalysed reaction is urea + 2 H2O + H(+) = hydrogencarbonate + 2 NH4(+). It participates in nitrogen metabolism; urea degradation; CO(2) and NH(3) from urea (urease route): step 1/1. This chain is Urease subunit alpha, found in Deinococcus radiodurans (strain ATCC 13939 / DSM 20539 / JCM 16871 / CCUG 27074 / LMG 4051 / NBRC 15346 / NCIMB 9279 / VKM B-1422 / R1).